A 357-amino-acid chain; its full sequence is 3-isopropylmalate dehydrogenase (357 aa).

76-89 (GPQWDTIDPSLRPE) contributes to the NAD(+) binding site. Substrate is bound by residues Arg-96, Arg-106, Arg-134, and Asp-224. Asp-224, Asp-248, and Asp-252 together coordinate Mg(2+). NAD(+) is bound at residue 282 to 294 (GSAPDIAGKGIAN).

This sequence belongs to the isocitrate and isopropylmalate dehydrogenases family. LeuB type 1 subfamily. In terms of assembly, homodimer. Requires Mg(2+) as cofactor. Mn(2+) serves as cofactor.

The protein localises to the cytoplasm. It catalyses the reaction (2R,3S)-3-isopropylmalate + NAD(+) = 4-methyl-2-oxopentanoate + CO2 + NADH. It functions in the pathway amino-acid biosynthesis; L-leucine biosynthesis; L-leucine from 3-methyl-2-oxobutanoate: step 3/4. Functionally, catalyzes the oxidation of 3-carboxy-2-hydroxy-4-methylpentanoate (3-isopropylmalate) to 3-carboxy-4-methyl-2-oxopentanoate. The product decarboxylates to 4-methyl-2 oxopentanoate. The polypeptide is 3-isopropylmalate dehydrogenase (Xanthomonas oryzae pv. oryzae (strain MAFF 311018)).